The following is a 258-amino-acid chain: MTNNKVALVTGGAQGIGFKIAERLVEDGFKVAVVDFNEEGAKAAALKLSSDGTKAIAIKADVSNRDDVFNAVRQTAAQFGDFHVMVNNAGLGPTTPIDTITEEQFKTVYGVNVAGVLWGIQAAHEQFKKFNHGGKIINATSQAGVEGNPGLSLYCSTKFAVRGLTQVAAQDLASEGITVNAFAPGIVQTPMMESIAVATAEEAGKPEAWGWEQFTSQIALGRVSQPEDVSNVVSFLAGKDSDYITGQTIIVDGGMRFR.

8 to 32 provides a ligand contact to NAD(+); the sequence is LVTGGAQGIGFKIAERLVEDGFKVA. Residue S141 coordinates substrate. Y154 acts as the Proton acceptor in catalysis. K158 is an active-site residue.

It belongs to the short-chain dehydrogenases/reductases (SDR) family.

The enzyme catalyses (S)-acetoin + NAD(+) = diacetyl + NADH + H(+). In terms of biological role, catalyzes the irreversible reduction of 2,3-butanediol to (S)-acetoin in the presence of NADH. The polypeptide is Diacetyl reductase [(S)-acetoin forming] (butA) (Staphylococcus aureus (strain Mu50 / ATCC 700699)).